Consider the following 1759-residue polypeptide: Collagen alpha-1(IV) chain (1759 aa).

Positions methionine 1 to cysteine 20 are cleaved as a signal peptide. Positions glutamine 21–lysine 194 are cleaved as a propeptide — N-terminal propeptide (7S domain). 6 disordered regions span residues proline 51–proline 245, lysine 269–glycine 415, alanine 548–proline 596, proline 618–glycine 650, isoleucine 666–proline 720, and arginine 787–glycine 1522. Composition is skewed to low complexity over residues histidine 104–leucine 116, proline 140–proline 153, and proline 278–lysine 293. Positions glycine 195 to tryptophan 1530 are triple-helical region. Composition is skewed to gly residues over residues glycine 324–glycine 345, glycine 360–glycine 370, and glycine 379–glycine 388. Composition is skewed to low complexity over residues arginine 399–proline 411 and methionine 574–leucine 595. Over residues tyrosine 833–proline 848 the composition is skewed to low complexity. A compositionally biased stretch (gly residues) spans glycine 904 to glycine 913. Composition is skewed to low complexity over residues tyrosine 1037 to proline 1047, glutamate 1219 to proline 1232, proline 1247 to aspartate 1271, and glutamine 1281 to proline 1309. Residues glycine 1310–glycine 1319 are compositionally biased toward gly residues. Residues leucine 1341–glutamate 1357 show a composition bias toward low complexity. A compositionally biased stretch (basic and acidic residues) spans proline 1410 to leucine 1422. Composition is skewed to low complexity over residues aspartate 1423–proline 1437 and proline 1472–proline 1482. The segment covering glycine 1495–glycine 1504 has biased composition (gly residues). The Collagen IV NC1 domain maps to glycine 1535–arginine 1759. Cystine bridges form between cysteine 1550–cysteine 1641, cysteine 1583–cysteine 1638, cysteine 1595–cysteine 1601, cysteine 1660–cysteine 1755, cysteine 1694–cysteine 1752, and cysteine 1706–cysteine 1712. Methionine 1623 participates in a covalent cross-link: S-Lysyl-methionine sulfilimine (Met-Lys) (interchain with K-1741). An S-Lysyl-methionine sulfilimine (Lys-Met) (interchain with M-1623) cross-link involves residue lysine 1741.

Belongs to the type IV collagen family. As to quaternary structure, trimers of two alpha 1(IV) and one alpha 2(IV) chain. Type IV collagen forms a mesh-like network linked through intermolecular interactions between 7S domains and between NC1 domains. In terms of processing, prolines at the third position of the tripeptide repeating unit (G-X-Y) are hydroxylated in some or all of the chains. Post-translationally, type IV collagens contain numerous cysteine residues which are involved in inter- and intramolecular disulfide bonding. 12 of these, located in the NC1 domain, are conserved in all known type IV collagens. The trimeric structure of the NC1 domains is stabilized by covalent bonds between Lys and Met residues.

Its subcellular location is the secreted. The protein resides in the extracellular space. The protein localises to the extracellular matrix. It is found in the basement membrane. Its function is as follows. Collagen type IV is specific for basement membranes. Required to restrict presynaptic growth at the neuromuscular junctions (NMJ) in late larval stage and in adult motor neurons. May play a role in axon regeneration in embryos following injury in D-type motor neurons. The chain is Collagen alpha-1(IV) chain from Caenorhabditis elegans.